The sequence spans 473 residues: Cysteine--tRNA ligase (473 aa).

C33 is a binding site for Zn(2+). The short motif at 35 to 45 (ATVQGQPHIGH) is the 'HIGH' region element. Positions 211, 236, and 240 each coordinate Zn(2+). The 'KMSKS' region signature appears at 267–271 (KMSKS). K270 is an ATP binding site.

The protein belongs to the class-I aminoacyl-tRNA synthetase family. In terms of assembly, monomer. Requires Zn(2+) as cofactor.

It localises to the cytoplasm. It catalyses the reaction tRNA(Cys) + L-cysteine + ATP = L-cysteinyl-tRNA(Cys) + AMP + diphosphate. This Mycobacterium leprae (strain Br4923) protein is Cysteine--tRNA ligase.